We begin with the raw amino-acid sequence, 174 residues long: UPF0340 protein SAHV_2098 (174 aa).

Belongs to the UPF0340 family.

The polypeptide is UPF0340 protein SAHV_2098 (Staphylococcus aureus (strain Mu3 / ATCC 700698)).